The chain runs to 366 residues: GTPase Obg (366 aa).

The Obg domain occupies 1–162; that stretch reads MRFVDEAVIK…KSLRLELKIL (162 aa). The interval 125 to 150 is disordered; it reads RGGKGNEHFKSSTMQAPRFSQPGEPG. The region spanning 163 to 335 is the OBG-type G domain; it reads ADAGLLGLPN…VVSEMWRMLA (173 aa). GTP is bound by residues 169 to 176, 194 to 198, 218 to 221, 288 to 291, and 316 to 318; these read GLPNAGKS, FTTLV, DIPG, NKID, and SAL. Residues Ser176 and Thr196 each contribute to the Mg(2+) site.

It belongs to the TRAFAC class OBG-HflX-like GTPase superfamily. OBG GTPase family. Monomer. Requires Mg(2+) as cofactor.

It is found in the cytoplasm. Functionally, an essential GTPase which binds GTP, GDP and possibly (p)ppGpp with moderate affinity, with high nucleotide exchange rates and a fairly low GTP hydrolysis rate. Plays a role in control of the cell cycle, stress response, ribosome biogenesis and in those bacteria that undergo differentiation, in morphogenesis control. The protein is GTPase Obg of Oleidesulfovibrio alaskensis (strain ATCC BAA-1058 / DSM 17464 / G20) (Desulfovibrio alaskensis).